A 239-amino-acid chain; its full sequence is Small ribosomal subunit protein uS2 (239 aa).

The protein belongs to the universal ribosomal protein uS2 family.

In Synechococcus sp. (strain WH7803), this protein is Small ribosomal subunit protein uS2.